The primary structure comprises 183 residues: uncharacterized protein (183 aa).

3 disordered regions span residues Met-1 to Ala-44, Gly-68 to Arg-137, and Arg-163 to Glu-183.

This is an uncharacterized protein from Dryophytes versicolor (chameleon treefrog).